The chain runs to 325 residues: Holliday junction branch migration complex subunit RuvB (325 aa).

Residues 1 to 180 (MKNQLLDAKV…FGIHLKLNFY (180 aa)) are large ATPase domain (RuvB-L). Residues L19, R20, G61, K64, T65, T66, 127 to 129 (EDF), R170, Y180, and R217 each bind ATP. Position 65 (T65) interacts with Mg(2+). The interval 181 to 251 (SCEELTKIVE…ITDYALNQLG (71 aa)) is small ATPAse domain (RuvB-S). Residues 254-325 (KLGLDSSDHK…ITANALKHLH (72 aa)) form a head domain (RuvB-H) region. DNA-binding residues include R290, R309, and R314.

This sequence belongs to the RuvB family. As to quaternary structure, homohexamer. Forms an RuvA(8)-RuvB(12)-Holliday junction (HJ) complex. HJ DNA is sandwiched between 2 RuvA tetramers; dsDNA enters through RuvA and exits via RuvB. An RuvB hexamer assembles on each DNA strand where it exits the tetramer. Each RuvB hexamer is contacted by two RuvA subunits (via domain III) on 2 adjacent RuvB subunits; this complex drives branch migration. In the full resolvosome a probable DNA-RuvA(4)-RuvB(12)-RuvC(2) complex forms which resolves the HJ.

It localises to the cytoplasm. The catalysed reaction is ATP + H2O = ADP + phosphate + H(+). The RuvA-RuvB-RuvC complex processes Holliday junction (HJ) DNA during genetic recombination and DNA repair, while the RuvA-RuvB complex plays an important role in the rescue of blocked DNA replication forks via replication fork reversal (RFR). RuvA specifically binds to HJ cruciform DNA, conferring on it an open structure. The RuvB hexamer acts as an ATP-dependent pump, pulling dsDNA into and through the RuvAB complex. RuvB forms 2 homohexamers on either side of HJ DNA bound by 1 or 2 RuvA tetramers; 4 subunits per hexamer contact DNA at a time. Coordinated motions by a converter formed by DNA-disengaged RuvB subunits stimulates ATP hydrolysis and nucleotide exchange. Immobilization of the converter enables RuvB to convert the ATP-contained energy into a lever motion, pulling 2 nucleotides of DNA out of the RuvA tetramer per ATP hydrolyzed, thus driving DNA branch migration. The RuvB motors rotate together with the DNA substrate, which together with the progressing nucleotide cycle form the mechanistic basis for DNA recombination by continuous HJ branch migration. Branch migration allows RuvC to scan DNA until it finds its consensus sequence, where it cleaves and resolves cruciform DNA. This Orientia tsutsugamushi (strain Ikeda) (Rickettsia tsutsugamushi) protein is Holliday junction branch migration complex subunit RuvB.